We begin with the raw amino-acid sequence, 394 residues long: Phosphoglycerate kinase (394 aa).

Residues 21-23 (DLN), arginine 37, 60-63 (HLGR), arginine 115, and arginine 148 contribute to the substrate site. Residues lysine 199, glutamate 321, and 347–350 (GGDT) contribute to the ATP site.

This sequence belongs to the phosphoglycerate kinase family. In terms of assembly, monomer.

It is found in the cytoplasm. The catalysed reaction is (2R)-3-phosphoglycerate + ATP = (2R)-3-phospho-glyceroyl phosphate + ADP. It functions in the pathway carbohydrate degradation; glycolysis; pyruvate from D-glyceraldehyde 3-phosphate: step 2/5. In Azoarcus sp. (strain BH72), this protein is Phosphoglycerate kinase.